A 455-amino-acid chain; its full sequence is Probable circularly permuted 1,3-beta-glucanase TOS1 (455 aa).

An N-terminal signal peptide occupies residues 1–23 (MLQKLSMTALVGLFSSVVSLVNA). Residues 158–221 (TADSTNTVVG…SSSSSSNTNG (64 aa)) form a disordered region. Residues 172-189 (SSYTKDSTVLSSSAQAVE) show a composition bias toward polar residues. Positions 190-219 (TSESQSSISSSKTTSSAAAASSSSSSSSNT) are enriched in low complexity. A glycan (N-linked (GlcNAc...) asparagine) is linked at Asn-236. An ExDxxE motif motif is present at residues 372–377 (EMDLFE). An N-linked (GlcNAc...) asparagine glycan is attached at Asn-417.

This sequence belongs to the PGA52 family.

The protein localises to the secreted. It is found in the cell wall. It catalyses the reaction Hydrolysis of (1-&gt;3)-beta-D-glucosidic linkages in (1-&gt;3)-beta-D-glucans.. In terms of biological role, probable circularly permuted 1,3-beta-glucanase involved in cell wall modification through beta-1,3-glucan network alterations such as increased branching or remodeling. This Saccharomyces cerevisiae (strain ATCC 204508 / S288c) (Baker's yeast) protein is Probable circularly permuted 1,3-beta-glucanase TOS1.